Here is a 357-residue protein sequence, read N- to C-terminus: MQSYSRLMQFKVKDLMIDKRRLVEVPDNATLGDALNTMVANRVRAVPVAAKPGQWLGAGGSMIVELDKQSGSARKQYIGMVTMLDVVAHIAGDDGESGLDKKMAAPVSSIIGHCPEGLSLWSLNPNTSIMDCMEMLSKGIHRVLVPLDSNTENITGPELVESASAYAMLSQMDLISFFFDQSSQLHGILSHTVTDLSAIHNTVLALTSQARVKDAIQCMSIAMLNAVPIVEASGEGEDHKQLVDGKNRRVVGTFSASDLKGCHLATLRSWLPLNALEFVEKIPRTLLFTAATSTPGRELVTCHVTSTLAQVIHMVTTKRVHRVWVVDQNGGLQGLVSLTDIIAVVRSALLSGAPDLF.

CBS domains follow at residues 16–97 (MIDK…DGES), 113–185 (HCPE…SSQL), 198–273 (AIHN…WLPL), and 293–351 (STPG…ALLS).

It belongs to the 5'-AMP-activated protein kinase gamma subunit family. As to expression, expressed highly in rosette leaves, cauline leaves, open flowers, developing siliques and dry seeds, but at a low level in stems and floral buds.

Functionally, plays redundant role with PV42a in regulating male gametogenesis and pollen tube guidance. This is SNF1-related protein kinase regulatory subunit gamma-like PV42b (PV42B) from Arabidopsis thaliana (Mouse-ear cress).